We begin with the raw amino-acid sequence, 65 residues long: Large ribosomal subunit protein uL30 (65 aa).

The protein belongs to the universal ribosomal protein uL30 family. As to quaternary structure, part of the 50S ribosomal subunit.

The polypeptide is Large ribosomal subunit protein uL30 (Chloroflexus aurantiacus (strain ATCC 29366 / DSM 635 / J-10-fl)).